Here is an 89-residue protein sequence, read N- to C-terminus: Small ribosomal subunit protein uS14A (89 aa).

The protein belongs to the universal ribosomal protein uS14 family. In terms of assembly, part of the 30S ribosomal subunit. Contacts proteins S3 and S10.

Functionally, binds 16S rRNA, required for the assembly of 30S particles and may also be responsible for determining the conformation of the 16S rRNA at the A site. The sequence is that of Small ribosomal subunit protein uS14A from Bacillus velezensis (strain DSM 23117 / BGSC 10A6 / LMG 26770 / FZB42) (Bacillus amyloliquefaciens subsp. plantarum).